The following is a 553-amino-acid chain: ATP synthase F(1) complex subunit alpha, mitochondrial (553 aa).

Residues 1–43 (MLSVRVAAAVARALPRRAGLVSKNALGSSFIAARNLHASNSRL) constitute a mitochondrion transit peptide. Gln-44 is modified (pyrrolidone carboxylic acid). Ser-53 and Ser-65 each carry phosphoserine. Residue Ser-76 is modified to Phosphoserine; alternate. Residue Ser-76 is glycosylated (O-linked (GlcNAc) serine; alternate). At Ser-106 the chain carries Phosphoserine. N6-acetyllysine is present on residues Lys-123, Lys-126, and Lys-132. At Thr-134 the chain carries Phosphothreonine. Residue Lys-161 is modified to N6-acetyllysine; alternate. An N6-succinyllysine; alternate modification is found at Lys-161. Ser-166 bears the Phosphoserine mark. Lys-167 bears the N6-acetyllysine; alternate mark. At Lys-167 the chain carries N6-succinyllysine; alternate. The residue at position 184 (Ser-184) is a Phosphoserine. Arg-204 is subject to Omega-N-methylarginine. ATP is bound by residues Gln-215, Gly-217, Lys-218, Thr-219, and Ser-220. Thr-219 is a Mg(2+) binding site. N6-acetyllysine; alternate is present on residues Lys-230 and Lys-239. Lys-230 and Lys-239 each carry N6-succinyllysine; alternate. Lys-240 bears the N6-acetyllysine mark. N6-acetyllysine; alternate is present on residues Lys-261 and Lys-305. An N6-succinyllysine; alternate mark is found at Lys-261 and Lys-305. Asp-312 is a binding site for Mg(2+). Lys-427 bears the N6-acetyllysine; alternate mark. Lys-427 is subject to N6-succinyllysine; alternate. Position 434 is an N6-acetyllysine (Lys-434). The ATP site is built by Gln-473 and Gln-475. N6-acetyllysine; alternate is present on residues Lys-498, Lys-506, Lys-531, and Lys-539. Residues Lys-498, Lys-506, Lys-531, and Lys-539 each carry the N6-succinyllysine; alternate modification. Lys-541 is modified (N6-acetyllysine).

This sequence belongs to the ATPase alpha/beta chains family. In terms of assembly, homotrimer. Component of the ATP synthase complex composed at least of ATP5F1A/subunit alpha, ATP5F1B/subunit beta, ATP5MC1/subunit c (homooctomer), MT-ATP6/subunit a, MT-ATP8/subunit 8, ATP5ME/subunit e, ATP5MF/subunit f, ATP5MG/subunit g, ATP5MK/subunit k, ATP5MJ/subunit j, ATP5F1C/subunit gamma, ATP5F1D/subunit delta, ATP5F1E/subunit epsilon, ATP5PF/subunit F6, ATP5PB/subunit b, ATP5PD/subunit d, ATP5PO/subunit OSCP. ATP synthase complex consists of a soluble F(1) head domain (subunits alpha(3) and beta(3)) - the catalytic core - and a membrane F(0) domain - the membrane proton channel (subunits c, a, 8, e, f, g, k and j). These two domains are linked by a central stalk (subunits gamma, delta, and epsilon) rotating inside the F1 region and a stationary peripheral stalk (subunits F6, b, d, and OSCP). Interacts with ATPAF2. Interacts with HRG; the interaction occurs on the surface of T-cells and alters the cell morphology when associated with concanavalin (in vitro). Interacts with PLG (angiostatin peptide); the interaction inhibits most of the angiogenic properties of angiostatin. Interacts with BLOC1S1. Interacts with BCL2L1 isoform BCL-X(L); the interaction mediates the association of BCL2L1 isoform BCL-X(L) with the mitochondrial membrane F(1)F(0) ATP synthase and enhances neurons metabolic efficiency. Interacts with CLN5 and PPT1. Interacts with S100A1; this interaction increases F1-ATPase activity. Interacts with ABCB7; this interaction allows the regulation of cellular iron homeostasis and cellular reactive oxygen species (ROS) levels in cardiomyocytes. Post-translationally, acetylated on lysine residues. BLOC1S1 is required for acetylation. In terms of tissue distribution, heart muscle (at protein level). Heart and liver.

It localises to the mitochondrion inner membrane. The protein resides in the cell membrane. Its function is as follows. Subunit alpha, of the mitochondrial membrane ATP synthase complex (F(1)F(0) ATP synthase or Complex V) that produces ATP from ADP in the presence of a proton gradient across the membrane which is generated by electron transport complexes of the respiratory chain. ATP synthase complex consist of a soluble F(1) head domain - the catalytic core - and a membrane F(1) domain - the membrane proton channel. These two domains are linked by a central stalk rotating inside the F(1) region and a stationary peripheral stalk. During catalysis, ATP synthesis in the catalytic domain of F(1) is coupled via a rotary mechanism of the central stalk subunits to proton translocation. In vivo, can only synthesize ATP although its ATP hydrolase activity can be activated artificially in vitro. With the catalytic subunit beta (ATP5F1B), forms the catalytic core in the F(1) domain. Subunit alpha does not bear the catalytic high-affinity ATP-binding sites. The polypeptide is ATP synthase F(1) complex subunit alpha, mitochondrial (Bos taurus (Bovine)).